Here is a 507-residue protein sequence, read N- to C-terminus: Glycine, alanine and asparagine-rich protein (507 aa).

Positions 1–17 (MLRVPLLVLCLALSVGA) are cleaved as a signal peptide. A coiled-coil region spans residues 158–185 (SAQALASATAELQAAQDAYDQASAYAEA). Gly residues predominate over residues 462-498 (GNGNGGNGRNGNGGNGRNGNGGNGGNGNGRNGRGGRY). The interval 462–507 (GNGNGGNGRNGNGGNGRNGNGGNGGNGNGRNGRGGRYYYGSSDYYY) is disordered.

In terms of tissue distribution, component of the acid-soluble and acid-insoluble organic matrix of calcified shell layers (at protein level).

The protein localises to the secreted. The protein is Glycine, alanine and asparagine-rich protein of Haliotis asinina (Donkey's ear abalone).